Here is a 95-residue protein sequence, read N- to C-terminus: Large ribosomal subunit protein eL37z (95 aa).

Positions 19, 22, 34, and 37 each coordinate Zn(2+). The segment at 19–37 adopts a C4-type zinc-finger fold; the sequence is CVRCGRRSFHIQKSRCSAC.

The protein belongs to the eukaryotic ribosomal protein eL37 family. Zn(2+) is required as a cofactor.

Its function is as follows. Binds to the 23S rRNA. The chain is Large ribosomal subunit protein eL37z (RPL37A) from Arabidopsis thaliana (Mouse-ear cress).